Here is a 245-residue protein sequence, read N- to C-terminus: NAD(P)H-quinone oxidoreductase subunit K (245 aa).

4 residues coordinate [4Fe-4S] cluster: cysteine 58, cysteine 59, cysteine 123, and cysteine 154.

Belongs to the complex I 20 kDa subunit family. In terms of assembly, NDH-1 can be composed of about 15 different subunits; different subcomplexes with different compositions have been identified which probably have different functions. It depends on [4Fe-4S] cluster as a cofactor.

It localises to the cellular thylakoid membrane. The catalysed reaction is a plastoquinone + NADH + (n+1) H(+)(in) = a plastoquinol + NAD(+) + n H(+)(out). The enzyme catalyses a plastoquinone + NADPH + (n+1) H(+)(in) = a plastoquinol + NADP(+) + n H(+)(out). NDH-1 shuttles electrons from an unknown electron donor, via FMN and iron-sulfur (Fe-S) centers, to quinones in the respiratory and/or the photosynthetic chain. The immediate electron acceptor for the enzyme in this species is believed to be plastoquinone. Couples the redox reaction to proton translocation, and thus conserves the redox energy in a proton gradient. Cyanobacterial NDH-1 also plays a role in inorganic carbon-concentration. The sequence is that of NAD(P)H-quinone oxidoreductase subunit K from Trichormus variabilis (strain ATCC 29413 / PCC 7937) (Anabaena variabilis).